A 181-amino-acid polypeptide reads, in one-letter code: Adenylate kinase (181 aa).

10-15 (GAGKGT) lines the ATP pocket. The tract at residues 30 to 59 (STGELFRKNIQDGTKLGVEAKRYLDAGDLV) is NMP. AMP contacts are provided by residues Thr-31, Arg-36, 57–59 (DLV), 85–88 (GYPR), and Gln-92. An LID region spans residues 126–132 (GRGRADD). Arg-127 is an ATP binding site. Arg-129 and Arg-140 together coordinate AMP. Gly-166 contributes to the ATP binding site.

Belongs to the adenylate kinase family. As to quaternary structure, monomer.

Its subcellular location is the cytoplasm. It carries out the reaction AMP + ATP = 2 ADP. It functions in the pathway purine metabolism; AMP biosynthesis via salvage pathway; AMP from ADP: step 1/1. Functionally, catalyzes the reversible transfer of the terminal phosphate group between ATP and AMP. Plays an important role in cellular energy homeostasis and in adenine nucleotide metabolism. The protein is Adenylate kinase of Mycobacterium ulcerans (strain Agy99).